We begin with the raw amino-acid sequence, 3033 residues long: Genome polyprotein (3033 aa).

N-acetylserine; by host is present on serine 2. An interaction with STAT1 region spans residues 2–23 (STNPKPQRKTKRNTNRRPEDVK). The interaction with EIF2AK2/PKR stretch occupies residues 2-58 (STNPKPQRKTKRNTNRRPEDVKFPGGGQIVGGVYLLPRRGPRLGVRTTRKTSERSQP). The tract at residues 2-59 (STNPKPQRKTKRNTNRRPEDVKFPGGGQIVGGVYLLPRRGPRLGVRTTRKTSERSQPR) is interaction with DDX3X. Residues 2–75 (STNPKPQRKT…PKDRRSTGKA (74 aa)) form a disordered region. Over 2–168 (STNPKPQRKT…EDGVNYATGN (167 aa)) the chain is Cytoplasmic. 2 consecutive short sequence motifs (nuclear localization signal) follow at residues 5-13 (PKPQRKTKR) and 38-43 (PRRGPR). Residues 7–16 (PQRKTKRNTN) show a composition bias toward basic residues. Low complexity predominate over residues 32 to 47 (GGVYLLPRRGPRLGVR). Serine 53 carries the post-translational modification Phosphoserine; by host. 2 consecutive short sequence motifs (nuclear localization signal) follow at residues 58 to 64 (PRGRRQP) and 66 to 71 (PKDRRS). Position 99 is a phosphoserine; by host (serine 99). The important for endoplasmic reticulum and mitochondrial localization stretch occupies residues 112 to 152 (PRHRSRNVGKVIDTLTCGFADLMGYIPVVGAPLSGAARAVA). Phosphoserine; by host PKA is present on serine 116. The interval 122-173 (VIDTLTCGFADLMGYIPVVGAPLSGAARAVAHGVRVLEDGVNYATGNLPGFP) is interaction with APOA2. Residues 164-167 (YATG) are important for lipid droplets localization. A helical transmembrane segment spans residues 169–189 (LPGFPFSIFLLALLSCITVPV). Residues 178–191 (LLALLSCITVPVSA) constitute a propeptide, ER anchor for the core protein, removed in mature form by host signal peptidase. Topologically, residues 190–358 (SAAQVKNTSS…SGAHWGVMFG (169 aa)) are lumenal. Residues asparagine 196, asparagine 209, and asparagine 234 are each glycosylated (N-linked (GlcNAc...) asparagine; by host). Residues 265–296 (VVMSATFCSALYVGDLCGGVMLAAQVFIVSPQ) form an important for fusion region. A glycan (N-linked (GlcNAc...) asparagine; by host) is linked at asparagine 305. A helical transmembrane segment spans residues 359-379 (LAYFSMQGAWAKVIVILLLAA). Residues 380–729 (GVDAGTTTVG…WEWVVLLFLL (350 aa)) lie on the Lumenal side of the membrane. Residues 385–411 (TTTVGGAVARSTNVIAGVFSHGPQQNI) form an HVR1 region. Residues asparagine 417, asparagine 423, asparagine 430, and asparagine 448 are each glycosylated (N-linked (GlcNAc...) (high mannose) asparagine; by host). 4 cysteine pairs are disulfide-bonded: cysteine 429-cysteine 554, cysteine 452-cysteine 459, cysteine 488-cysteine 496, and cysteine 505-cysteine 510. Asparagine 477 is a glycosylation site (N-linked (GlcNAc...) (high mannose) asparagine; by host). Residues 484 to 496 (MRPYCWHYPPKPC) are CD81-binding 1. Residues 524-555 (RGVPTYTWGENETDVFLLNSTRPPQGSWFGCT) are CD81-binding 2. N-linked (GlcNAc...) (high mannose) asparagine; by host glycans are attached at residues asparagine 534, asparagine 542, and asparagine 558. Cysteine 566 and cysteine 571 are joined by a disulfide. Residue asparagine 578 is glycosylated (N-linked (GlcNAc...) (high mannose) asparagine; by host). Cystine bridges form between cysteine 585–cysteine 589, cysteine 601–cysteine 624, and cysteine 611–cysteine 648. N-linked (GlcNAc...) (high mannose) asparagine; by host glycans are attached at residues asparagine 627 and asparagine 649. The cysteines at positions 656 and 681 are disulfide-linked. The EIF2AK2/eIF2-alpha phosphorylation homology domain (PePHD) stretch occupies residues 664–675 (SQLSPLLHSTTE). Residues 730 to 750 (LADARVCACLWMLILLGQAEA) form a helical membrane-spanning segment. The Lumenal segment spans residues 751-761 (ALEKLVVLHAA). A helical transmembrane segment spans residues 762–782 (SAANCHGLLYFAIFFVAAWHI). At 783 to 785 (RGR) the chain is on the cytoplasmic side. A helical membrane pass occupies residues 786–807 (VVPLTTYCLTGLWPFCLLLMAL). At 808–817 (PRQAYAYDAP) the chain is on the lumenal side. A helical transmembrane segment spans residues 818-838 (VHGQIGVGLLILITLFTLTPG). The Cytoplasmic portion of the chain corresponds to 839–842 (YKTL). The helical transmembrane segment at 843–863 (LGQCLWWLCYLLTLGEAMIQE) threads the bilayer. Residues 864–885 (WVPPMQVRGGRDGIAWAVTIFC) are Lumenal-facing. A helical membrane pass occupies residues 886–906 (PGVVFDITKWLLALLGPAYLL). The Peptidase C18 domain occupies 907 to 1030 (RAALTHVPYF…GYTSKGWKLL (124 aa)). The Cytoplasmic segment spans residues 907–1661 (RAALTHVPYF…CMQADLEVMT (755 aa)). The protease NS2-3 stretch occupies residues 908–1210 (AALTHVPYFV…PVETLDVVTR (303 aa)). Cysteine 926 carries the S-palmitoyl cysteine; by host lipid modification. An interaction with human SCPS1 region spans residues 933–953 (AGGRYVQVALLALGRWTGTYI). Catalysis depends on for protease NS2 activity; shared with dimeric partner residues histidine 956, glutamate 976, and cysteine 997. The Peptidase S29 domain occupies 1031 to 1212 (APITAYAQQT…ETLDVVTRSP (182 aa)). Residues histidine 1087 and aspartate 1111 each act as charge relay system; for serine protease NS3 activity in the active site. Zn(2+)-binding residues include cysteine 1127 and cysteine 1129. Serine 1169 acts as the Charge relay system; for serine protease NS3 activity in catalysis. 2 residues coordinate Zn(2+): cysteine 1175 and histidine 1179. Residues 1221-1373 (PAVPQTYQVG…PDIEEVGLGR (153 aa)) enclose the Helicase ATP-binding domain. Position 1234–1241 (1234–1241 (APTGSGKS)) interacts with ATP. Mg(2+) is bound by residues serine 1241 and glutamate 1321. The short motif at 1320-1323 (DECH) is the DECH box element. Positions 1481–1501 (VPQDAVSRSQRRGRTGRGRQG) are disordered. An RNA-binding region spans residues 1490–1501 (QRRGRTGRGRQG). The chain crosses the membrane as a helical span at residues 1662-1682 (STWVLAGGVLAAVAAYCLATG). The interval 1683-1694 (CVSIIGRLHVNQ) is NS3-binding. Topologically, residues 1683–1809 (CVSIIGRLHV…ALTSPLSTST (127 aa)) are cytoplasmic. A helical transmembrane segment spans residues 1810–1830 (TILLNIMGGWLASQIAPPAGA). Over 1831 to 1832 (TG) the chain is Lumenal. A helical membrane pass occupies residues 1833 to 1853 (FVVSGLVGAAVGSIGLGKVLV). The interval 1837–1865 (GLVGAAVGSIGLGKVLVDILAGYGAGISG) is glycine zipper. Position 1854 (aspartate 1854) is a topological domain, cytoplasmic. Residues 1855–1875 (ILAGYGAGISGALVAFKIMSG) traverse the membrane as a helical segment. The Lumenal segment spans residues 1876-1885 (EKPSMEDVIN). Residues 1886–1906 (LLPGILSPGALVVGVICAAIL) form a helical membrane-spanning segment. The Cytoplasmic portion of the chain corresponds to 1907–1976 (RRHVGPGEGA…WITEDCPIPC (70 aa)). A lipid anchor (S-palmitoyl cysteine; by host) is attached at cysteine 1972. Residue cysteine 1976 is the site of S-palmitoyl cysteine; by host; partial attachment. An intramembrane segment occupies 1977-2007 (SGSWLRDVWDWVCTILTDFKNWLTSKLFPKL). The segment at 1982–2002 (RDVWDWVCTILTDFKNWLTSK) is membrane-binding. The Cytoplasmic segment spans residues 2008-3012 (PGLPFISCQK…FHSVSRARPR (1005 aa)). The tract at residues 2009–2225 (GLPFISCQKG…RATCTTHSNT (217 aa)) is D1; RNA-binding. Zn(2+) is bound by residues cysteine 2015, cysteine 2033, cysteine 2035, and cysteine 2056. A Phosphotyrosine; by host modification is found at tyrosine 2069. The interval 2124 to 2212 (EFFSWVDGVQ…ASSSVSQLSA (89 aa)) is FKBP8-binding. A transcriptional activation region spans residues 2124–2332 (EFFSWVDGVQ…PTPPPRRRRT (209 aa)). An interaction with non-structural protein 4A region spans residues 2139 to 2143 (PTPKP). The segment at 2192-2213 (RRLARGSPPSEASSSVSQLSAP) is disordered. A compositionally biased stretch (low complexity) spans 2196 to 2213 (RGSPPSEASSSVSQLSAP). Serine 2198 is modified (phosphoserine; by host; in p56). Serine 2201 carries the post-translational modification Phosphoserine; by host; in p58. Serine 2205 carries the phosphoserine; by host; in p56 and p58, regulates intracellular NS5A distribution modification. Phosphoserine; by host; in p58 occurs at positions 2208, 2211, and 2214. The ISDR stretch occupies residues 2210 to 2249 (LSAPSLRATCTTHSNTYDVDMVDANLLMEGGVAQTEPESR). The interaction with EIF2AK2/PKR stretch occupies residues 2214–2275 (SLRATCTTHS…LEPSIPSECM (62 aa)). The tract at residues 2227-2315 (DVDMVDANLL…YQPPTVAGCA (89 aa)) is D2. The disordered stretch occupies residues 2228–2315 (VDMVDANLLM…YQPPTVAGCA (88 aa)). Residues 2249–2306 (RVPVLDFLEPMAEEESDLEPSIPSECMLPRSGFPRALPAWARPDYNPPLVESWRRPDY) form an NS4B-binding region. The tract at residues 2281–2297 (FPRALPAWARPDYNPPL) is interaction with human PPIA/CYPA. The segment covering 2316–2326 (LPPPKKAPTPP) has biased composition (pro residues). The short motif at 2322-2325 (APTP) is the SH3-binding element. Residue threonine 2324 is modified to Phosphothreonine; by host. Positions 2326–2334 (PPRRRRTVG) match the Nuclear localization signal motif. Residues 2329-2442 (RRRTVGLSES…SEEDDTTVCC (114 aa)) form a D3 region. The interval 2336–2447 (SESTISEALQ…TTVCCSMSYS (112 aa)) is interaction with host IFI27. Lysine 2350 is covalently cross-linked (Glycyl lysine isopeptide (Lys-Gly) (interchain with G-Cter in ubiquitin)). A disordered region spans residues 2352-2432 (FGQPPSSGDA…GSGSGSWSTC (81 aa)). Residues 2355-2379 (PPSSGDAGSSTGAGAAESGGPTSPG) show a composition bias toward low complexity. Residues 2358–2381 (SGDAGSSTGAGAAESGGPTSPGEP) form a V3 region. Residues 2371 to 2439 (ESGGPTSPGE…STCSEEDDTT (69 aa)) are interaction with host VAPB. Over residues 2398–2408 (EPGDPDLESDQ) the composition is skewed to acidic residues. The span at 2417 to 2426 (GGGVAPGSGS) shows a compositional bias: gly residues. In terms of domain architecture, RdRp catalytic spans 2656–2774 (PMGFSYDTRC…ISESQGTEED (119 aa)). Aspartate 2662, aspartate 2760, and aspartate 2761 together coordinate Mg(2+). The helical transmembrane segment at 3013-3033 (SLLFGLLLLFVGVGLFLLPAR) threads the bilayer.

It belongs to the hepacivirus polyprotein family. Homooligomer. Interacts with E1 (via C-terminus). Interacts with the non-structural protein 5A. Interacts (via N-terminus) with host STAT1 (via SH2 domain); this interaction results in decreased STAT1 phosphorylation and ubiquitin-mediated proteasome-dependent STAT1 degradation, leading to decreased IFN-stimulated gene transcription. Interacts with host STAT3; this interaction constitutively activates STAT3. Interacts with host LTBR receptor. Interacts with host TNFRSF1A receptor and possibly induces apoptosis. Interacts with host HNRPK. Interacts with host YWHAE. Interacts with host UBE3A/E6AP. Interacts with host DDX3X. Interacts with host APOA2. Interacts with host RXRA protein. Interacts with host SP110 isoform 3/Sp110b; this interaction sequesters the transcriptional corepressor SP110 away from the nucleus. Interacts with host CREB3 nuclear transcription protein; this interaction triggers cell transformation. Interacts with host ACY3. Interacts with host C1QR1. Interacts with host RBM24; this interaction, which enhances the interaction of the mature core protein with 5'-UTR, may inhibit viral translation and favor replication. Interacts (via N-terminus) with host EIF2AK2/PKR (via N-terminus); this interaction induces the autophosphorylation of EIF2AK2. Part of the viral assembly initiation complex composed of NS2, E1, E2, NS3, NS4A, NS5A and the mature core protein. In terms of assembly, forms a heterodimer with envelope glycoprotein E2. Interacts with mature core protein. Interacts with protease NS2. The heterodimer E1/E2 interacts with host CLDN1; this interaction plays a role in viral entry into host cell. Interacts with host SPSB2 (via C-terminus). Part of the viral assembly initiation complex composed of NS2, E1, E2, NS3, NS4A, NS5A and the mature core protein. As to quaternary structure, forms a heterodimer with envelope glycoprotein E1. Interacts with host CD81 and SCARB1 receptors; these interactions play a role in viral entry into host cell. Interacts with host EIF2AK2/PKR; this interaction inhibits EIF2AK2 and probably allows the virus to evade the innate immune response. Interacts with host CD209/DC-SIGN and CLEC4M/DC-SIGNR. Interact with host SPCS1; this interaction is essential for viral particle assembly. Interacts with protease NS2. The heterodimer E1/E2 interacts with host CLDN1; this interaction plays a role in viral entry into host cell. Part of the viral assembly initiation complex composed of NS2, E1, E2, NS3, NS4A, NS5A and the mature core protein. Interacts with host SLC3A2/4F2hc; the interaction may facilitate viral entry into host cell. Homohexamer. Homoheptamer. Interacts with protease NS2. In terms of assembly, homodimer. Interacts with host SPCS1; this interaction is essential for viral particle assembly. Interacts with envelope glycoprotein E1. Interacts with envelope glycoprotein E2. Interacts with viroporin p7. Interacts with serine protease/helicase NS3. Part of the replication complex composed of NS2, NS3, NS4A, NS4B, NS5A and the RNA-directed RNA polymerase embedded in an ER-derived membranous web. Part of the viral assembly initiation complex composed of NS2, E1, E2, NS3, NS4A, NS5A and the mature core protein. Interacts with host NEURL3; this interaction prevents E1 binding to glycoprotein E2. As to quaternary structure, interacts with protease NS2. Interacts with non-structural protein 4A; this interaction stabilizes the folding of NS3 serine protease. NS3-NS4A interaction is essential for NS3 activation and allows membrane anchorage of the latter. NS3/NS4A complex also prevents phosphorylation of host IRF3, thus preventing the establishment of dsRNA induced antiviral state. Interacts with host MAVS; this interaction leads to the cleavage and inhibition of host MAVS. Interacts with host TICAM1; this interaction leads to the cleavage and inhibition of host TICAM1. Interacts with host TANK-binding kinase/TBK1; this interaction results in the inhibition of the association between TBK1 and IRF3, which leads to the inhibition of IRF3 activation. Interacts with host RBM24. Part of the replication complex composed of NS2, NS3, NS4A, NS4B, NS5A and the RNA-directed RNA polymerase embedded in an ER-derived membranous web. Part of the viral assembly initiation complex composed of NS2, E1, E2, NS3, NS4A, NS5A and the mature core protein. Interacts with NS3 serine protease; this interaction stabilizes the folding of NS3 serine protease. NS3-NS4A interaction is essential for NS3 activation and allows membrane anchorage of the latter. Interacts with non-structural protein 5A (via N-terminus). Part of the replication complex composed of NS2, NS3, NS4A, NS4B, NS5A and the RNA-directed RNA polymerase embedded in an ER-derived membranous web. Part of the viral assembly initiation complex composed of NS2, E1, E2, NS3, NS4A, NS5A and the mature core protein. In terms of assembly, homomultimer. Interacts with non-structural protein NS5A. Interacts with host PLA2G4C; this interaction likely initiates the recruitment of replication complexes to lipid droplets. Interacts with host STING; this interaction disrupts the interaction between STING and TBK1 thereby suppressing the interferon signaling. Part of the replication complex composed of NS2, NS3, NS4A, NS4B, NS5A and the RNA-directed RNA polymerase embedded in an ER-derived membranous web. As to quaternary structure, monomer. Homodimer; dimerization is required for RNA-binding. Interacts with the mature core protein. Interacts (via N-terminus) with non-structural protein 4A. Interacts with non-structural protein 4B. Interacts (via region D2) with RNA-directed RNA polymerase. Part of the viral assembly initiation complex composed of NS2, E1, E2, NS3, NS4A, NS5A and the mature core protein. Part of the replication complex composed of NS2, NS3, NS4A, NS4B, NS5A and the RNA-directed RNA polymerase embedded in an ER-derived membranous web. Interacts with host GRB2. Interacts with host BIN1. Interacts with host PIK3R1. Interacts with host SRCAP. Interacts with host FKBP8. Interacts (via C-terminus) with host VAPB (via MSP domain). Interacts with host EIF2AK2/PKR; this interaction leads to disruption of EIF2AK2 dimerization by NS5A and probably allows the virus to evade the innate immune response. Interacts (via N-terminus) with host PACSIN2 (via N-terminus); this interaction attenuates protein kinase C alpha-mediated phosphorylation of PACSIN2 by disrupting the interaction between PACSIN2 and PRKCA. Interacts (via N-terminus) with host SRC kinase (via SH2 domain). Interacts with most Src-family kinases. Interacts with host IFI27 and SKP2; promotes the ubiquitin-mediated proteasomal degradation of NS5A. Interacts with host GPS2. Interacts with host TNFRSF21; this interaction allows the modulation by the virus of JNK, p38 MAPK, STAT3, and Akt signaling pathways in a DR6-dependent manner. Interacts (via N-terminus) with host CIDEB (via N-terminus); this interaction seems to regulate the association of HCV particles with APOE. Interacts with host CHKA/Choline Kinase-alpha; CHKA bridges host PI4KA and NS5A and potentiates NS5A-stimulated PI4KA activity, which then facilitates the targeting of the ternary complex to the ER for viral replication. Interacts with host SPSB2 (via C-terminus); this interaction targets NS5A for ubiquitination and degradation. Interacts with host RAB18; this interaction may promote the association of NS5A and other replicase components with lipid droplets. Interacts (via region D2) with host PPIA/CYPA; the interaction stimulates RNA-binding ability of NS5A and is dependent on the peptidyl-prolyl cis-trans isomerase activity of PPIA/CYPA. Interacts with host TRIM14; this interaction induces the degradation of NS5A. Homooligomer. Interacts with non-structural protein 5A. Interacts with host VAPB. Interacts with host PRK2/PKN2. Interacts with host HNRNPA1 and SEPT6; these interactions facilitate the viral replication. Part of the replication complex composed of NS2, NS3, NS4A, NS4B, NS5A and the RNA-directed RNA polymerase embedded in an ER-derived membranous web. Zn(2+) serves as cofactor. Mg(2+) is required as a cofactor. In terms of processing, specific enzymatic cleavages in vivo yield mature proteins. The structural proteins, core, E1, E2 and p7 are produced by proteolytic processing by host signal peptidases. The core protein is synthesized as a 23 kDa precursor which is retained in the ER membrane through the hydrophobic signal peptide. Cleavage by the signal peptidase releases the 21 kDa mature core protein. The cleavage of the core protein precursor occurs between aminoacids 176 and 188 but the exact cleavage site is not known. Some degraded forms of the core protein appear as well during the course of infection. The other proteins (p7, NS2, NS3, NS4A, NS4B, NS5A and NS5B) are cleaved by the viral proteases. Autoprocessing between NS2 and NS3 is mediated by the NS2 cysteine protease catalytic domain and regulated by the NS3 N-terminal domain. Post-translationally, phosphorylated by host PKC and PKA. Ubiquitinated; mediated by UBE3A and leading to core protein subsequent proteasomal degradation. In terms of processing, highly N-glycosylated. Post-translationally, palmitoylation is required for NS2/3 autoprocessing and E2 recruitment to membranes. Palmitoylated. This modification may play a role in its polymerization or in protein-protein interactions. In terms of processing, cleaved by host caspases which arec probably activated by the viral infection. Post-translationally, ubiquitinated. Ubiquitination, most probably at Lys-2350, mediated by host IFI27 and SKP2 leads to proteasomal degradation, restricting viral infection. Phosphorylated on serines in a basal form termed p56. p58 is a hyperphosphorylated form of p56. p56 and p58 coexist in the cell in roughly equivalent amounts. Hyperphosphorylation is dependent on the presence of NS4A. Host CSNK1A1/CKI-alpha, PI4KA or RPS6KB1 kinases may be responsible for NS5A phosphorylation. Phosphorylated NS5A is involved in viral replication. In terms of processing, tyrosine phosphorylation is essential for the interaction with host SRC. Post-translationally, the N-terminus is phosphorylated by host PRK2/PKN2.

The protein localises to the host endoplasmic reticulum membrane. It is found in the host mitochondrion membrane. Its subcellular location is the virion. The protein resides in the host cytoplasm. It localises to the host nucleus. The protein localises to the host lipid droplet. It is found in the virion membrane. Its subcellular location is the host mitochondrion. The protein resides in the host cell membrane. It localises to the host perinuclear region. The enzyme catalyses Hydrolysis of four peptide bonds in the viral precursor polyprotein, commonly with Asp or Glu in the P6 position, Cys or Thr in P1 and Ser or Ala in P1'.. It catalyses the reaction a ribonucleoside 5'-triphosphate + H2O = a ribonucleoside 5'-diphosphate + phosphate + H(+). The catalysed reaction is ATP + H2O = ADP + phosphate + H(+). It carries out the reaction RNA(n) + a ribonucleoside 5'-triphosphate = RNA(n+1) + diphosphate. With respect to regulation, inhibited by the antiviral drug hexamethylene amiloride. Inhibition by amantadine appears to be genotype-dependent. Also inhibited by long-alkyl-chain iminosugar derivatives. Its activity is regulated as follows. Activity is up-regulated by PRK2/PKN2-mediated phosphorylation. Functionally, packages viral RNA to form a viral nucleocapsid, and promotes virion budding. Participates in the viral particle production as a result of its interaction with the non-structural protein 5A. Binds RNA and may function as a RNA chaperone to induce the RNA structural rearrangements taking place during virus replication. Modulates viral translation initiation by interacting with viral IRES and 40S ribosomal subunit. Affects various cell signaling pathways, host immunity and lipid metabolism. Prevents the establishment of cellular antiviral state by blocking the interferon-alpha/beta (IFN-alpha/beta) and IFN-gamma signaling pathways and by blocking the formation of phosphorylated STAT1 and promoting ubiquitin-mediated proteasome-dependent degradation of STAT1. Activates STAT3 leading to cellular transformation. Regulates the activity of cellular genes, including c-myc and c-fos. May repress the promoter of p53, and sequester CREB3 and SP110 isoform 3/Sp110b in the cytoplasm. Represses cell cycle negative regulating factor CDKN1A, thereby interrupting an important check point of normal cell cycle regulation. Targets transcription factors involved in the regulation of inflammatory responses and in the immune response: suppresses NF-kappa-B activation, and activates AP-1. Binds to dendritic cells (DCs) via C1QR1, resulting in down-regulation of T-lymphocytes proliferation. Alters lipid metabolism by interacting with hepatocellular proteins involved in lipid accumulation and storage. Induces up-regulation of FAS promoter activity, and thereby contributes to the increased triglyceride accumulation in hepatocytes (steatosis). Forms a heterodimer with envelope glycoprotein E2, which mediates virus attachment to the host cell, virion internalization through clathrin-dependent endocytosis and fusion with host membrane. Fusion with the host cell is most likely mediated by both E1 and E2, through conformational rearrangements of the heterodimer required for fusion rather than a classical class II fusion mechanism. E1/E2 heterodimer binds host apolipoproteins such as APOB and APOE thereby forming a lipo-viro-particle (LVP). APOE associated to the LVP allows the initial virus attachment to cell surface receptors such as the heparan sulfate proteoglycans (HSPGs), syndecan-1 (SDC1), syndecan-1 (SDC2), the low-density lipoprotein receptor (LDLR) and scavenger receptor class B type I (SCARB1). The cholesterol transfer activity of SCARB1 allows E2 exposure and binding of E2 to SCARB1 and the tetraspanin CD81. E1/E2 heterodimer binding on CD81 activates the epithelial growth factor receptor (EGFR) signaling pathway. Diffusion of the complex E1-E2-EGFR-SCARB1-CD81 to the cell lateral membrane allows further interaction with Claudin 1 (CLDN1) and occludin (OCLN) to finally trigger HCV entry. In terms of biological role, forms a heterodimer with envelope glycoprotein E1, which mediates virus attachment to the host cell, virion internalization through clathrin-dependent endocytosis and fusion with host membrane. Fusion with the host cell is most likely mediated by both E1 and E2, through conformational rearrangements of the heterodimer required for fusion rather than a classical class II fusion mechanism. The interaction between envelope glycoprotein E2 and host apolipoprotein E/APOE allows the proper assembly, maturation and infectivity of the viral particles. This interaction is probably promoted via the up-regulation of cellular autophagy by the virus. E1/E2 heterodimer binds host apolipoproteins such as APOB and APOE thereby forming a lipo-viro-particle (LVP). APOE associated to the LVP allows the initial virus attachment to cell surface receptors such as the heparan sulfate proteoglycans (HSPGs), syndecan-1 (SDC1), syndecan-1 (SDC2), the low-density lipoprotein receptor (LDLR) and scavenger receptor class B type I (SCARB1). The cholesterol transfer activity of SCARB1 allows E2 exposure and binding of E2 to SCARB1 and the tetraspanin CD81. E1/E2 heterodimer binding on CD81 activates the epithelial growth factor receptor (EGFR) signaling pathway. Diffusion of the complex E1-E2-EGFR-SCARB1-CD81 to the cell lateral membrane allows further interaction with Claudin 1 (CLDN1) and occludin (OCLN) to finally trigger HCV entry. Inhibits host EIF2AK2/PKR activation, preventing the establishment of an antiviral state. Viral ligand for CD209/DC-SIGN and CLEC4M/DC-SIGNR, which are respectively found on dendritic cells (DCs), and on liver sinusoidal endothelial cells and macrophage-like cells of lymph node sinuses. These interactions allow the capture of circulating HCV particles by these cells and subsequent facilitated transmission to permissive cells such as hepatocytes and lymphocyte subpopulations. The interaction between E2 and host amino acid transporter complex formed by SLC3A2 and SLC7A5/LAT1 may facilitate viral entry into host cell. Its function is as follows. Ion channel protein that acts as a viroporin and plays an essential role in the assembly, envelopment and secretion of viral particles. Regulates the host cell secretory pathway, which induces the intracellular retention of viral glycoproteins and favors assembly of viral particles. Creates a pore in acidic organelles and releases Ca(2+) and H(+) in the cytoplasm of infected cells, leading to a productive viral infection. High levels of cytoplasmic Ca(2+) may trigger membrane trafficking and transport of viral ER-associated proteins to viroplasms, sites of viral genome replication. This ionic imbalance induces the assembly of the inflammasome complex, which triggers the maturation of pro-IL-1beta into IL-1beta through the action of caspase-1. Targets also host mitochondria and induces mitochondrial depolarization. In addition of its role as a viroporin, acts as a lipid raft adhesion factor. Functionally, cysteine protease required for the proteolytic auto-cleavage between the non-structural proteins NS2 and NS3. The N-terminus of NS3 is required for the function of NS2 protease (active region NS2-3). Promotes the initiation of viral particle assembly by mediating the interaction between structural and non-structural proteins. Displays three enzymatic activities: serine protease with a chymotrypsin-like fold, NTPase and RNA helicase. NS3 serine protease, in association with NS4A, is responsible for the cleavages of NS3-NS4A, NS4A-NS4B, NS4B-NS5A and NS5A-NS5B. The NS3/NS4A complex prevents phosphorylation of host IRF3, thus preventing the establishment of dsRNA induced antiviral state. The NS3/NS4A complex induces host amino acid transporter component SLC3A2, thus contributing to HCV propagation. NS3 RNA helicase binds to RNA and unwinds both dsDNA and dsRNA in the 3' to 5' direction, and likely resolves RNA complicated stable secondary structures in the template strand. Binds a single ATP and catalyzes the unzipping of a single base pair of dsRNA. Inhibits host antiviral proteins TBK1 and IRF3 thereby preventing the establishment of an antiviral state. Cleaves host MAVS/CARDIF thereby preventing the establishment of an antiviral state. Cleaves host TICAM1/TRIF, thereby disrupting TLR3 signaling and preventing the establishment of an antiviral state. In terms of biological role, peptide cofactor which forms a non-covalent complex with the N-terminal of NS3 serine protease. The NS3/NS4A complex prevents phosphorylation of host IRF3, thus preventing the establishment of dsRNA induced antiviral state. The NS3/NS4A complex induces host amino acid transporter component SLC3A2, thus contributing to HCV propagation. Its function is as follows. Induces a specific membrane alteration that serves as a scaffold for the virus replication complex. This membrane alteration gives rise to the so-called ER-derived membranous web that contains the replication complex. NS4B self-interaction contributes to its function in membranous web formation. Promotes host TRIF protein degradation in a CASP8-dependent manner thereby inhibiting host TLR3-mediated interferon signaling. Disrupts the interaction between STING and TBK1 contributing to the inhibition of interferon signaling. Functionally, phosphorylated protein that is indispensable for viral replication and assembly. Both hypo- and hyperphosphorylated states are required for the viral life cycle. The hyperphosphorylated form of NS5A is an inhibitor of viral replication. Involved in RNA-binding and especially in binding to the viral genome. Zinc is essential for RNA-binding. Participates in the viral particle production as a result of its interaction with the viral mature core protein. Its interaction with host VAPB may target the viral replication complex to vesicles. Down-regulates viral IRES translation initiation. Mediates interferon resistance, presumably by interacting with and inhibiting host EIF2AK2/PKR. Prevents BIN1-induced apoptosis. Acts as a transcriptional activator of some host genes important for viral replication when localized in the nucleus. Via the interaction with host PACSIN2, modulates lipid droplet formation in order to promote virion assembly. Modulates TNFRSF21/DR6 signaling pathway for viral propagation. RNA-dependent RNA polymerase that performs primer-template recognition and RNA synthesis during viral replication. Initiates RNA transcription/replication at a flavin adenine dinucleotide (FAD), resulting in a 5'- FAD cap on viral RNAs. In this way, recognition of viral 5' RNA by host pattern recognition receptors can be bypassed, thereby evading activation of antiviral pathways. The chain is Genome polyprotein from Homo sapiens (Human).